The primary structure comprises 405 residues: Squamosa promoter-binding-like protein 6 (405 aa).

An SBP-type zinc finger spans residues Asn121–Pro198. Zn(2+)-binding residues include Cys124, Cys129, Cys146, His149, Cys165, Cys168, His172, and Cys184. A Bipartite nuclear localization signal motif is present at residues Lys181 to Lys197.

The cofactor is Zn(2+).

It localises to the nucleus. Functionally, trans-acting factor that binds specifically to the consensus nucleotide sequence 5'-TNCGTACAA-3'. The chain is Squamosa promoter-binding-like protein 6 (SPL6) from Arabidopsis thaliana (Mouse-ear cress).